Here is a 102-residue protein sequence, read N- to C-terminus: Small ribosomal subunit protein uS10 (102 aa).

This sequence belongs to the universal ribosomal protein uS10 family. In terms of assembly, part of the 30S ribosomal subunit.

Functionally, involved in the binding of tRNA to the ribosomes. In Sulfolobus acidocaldarius (strain ATCC 33909 / DSM 639 / JCM 8929 / NBRC 15157 / NCIMB 11770), this protein is Small ribosomal subunit protein uS10.